A 461-amino-acid polypeptide reads, in one-letter code: Cysteine--tRNA ligase (461 aa).

Residue cysteine 28 participates in Zn(2+) binding. Residues 30 to 40 carry the 'HIGH' region motif; the sequence is ITVYDLCHIGH. Cysteine 209, histidine 234, and glutamate 238 together coordinate Zn(2+). The short motif at 266–270 is the 'KMSKS' region element; that stretch reads KMSKS. Lysine 269 contacts ATP.

This sequence belongs to the class-I aminoacyl-tRNA synthetase family. In terms of assembly, monomer. The cofactor is Zn(2+).

The protein localises to the cytoplasm. It catalyses the reaction tRNA(Cys) + L-cysteine + ATP = L-cysteinyl-tRNA(Cys) + AMP + diphosphate. This is Cysteine--tRNA ligase from Salmonella arizonae (strain ATCC BAA-731 / CDC346-86 / RSK2980).